The chain runs to 423 residues: Glutaminase (423 aa).

Residues G27 to M312 form a glutaminase region. Substrate is bound by residues S69, N119, E165, N172, Y196, Y248, and V266. The STAS domain occupies A321 to L423.

It belongs to the glutaminase family. In terms of assembly, homotetramer.

The enzyme catalyses L-glutamine + H2O = L-glutamate + NH4(+). This Corynebacterium efficiens (strain DSM 44549 / YS-314 / AJ 12310 / JCM 11189 / NBRC 100395) protein is Glutaminase (glsA).